The chain runs to 226 residues: 2-C-methyl-D-erythritol 4-phosphate cytidylyltransferase (226 aa).

The protein belongs to the IspD/TarI cytidylyltransferase family. IspD subfamily.

The catalysed reaction is 2-C-methyl-D-erythritol 4-phosphate + CTP + H(+) = 4-CDP-2-C-methyl-D-erythritol + diphosphate. It participates in isoprenoid biosynthesis; isopentenyl diphosphate biosynthesis via DXP pathway; isopentenyl diphosphate from 1-deoxy-D-xylulose 5-phosphate: step 2/6. Catalyzes the formation of 4-diphosphocytidyl-2-C-methyl-D-erythritol from CTP and 2-C-methyl-D-erythritol 4-phosphate (MEP). The sequence is that of 2-C-methyl-D-erythritol 4-phosphate cytidylyltransferase from Bacillus mycoides (strain KBAB4) (Bacillus weihenstephanensis).